Reading from the N-terminus, the 338-residue chain is MTIRIAINGFGRIGRSVLRALYESGRRAEISVVAINELANAEGMAHLLKYDSSHGRFAWDVRQECDKLYVGDDIIRLIHQPEIEQLPWGELGIDVVLDCSGVYGSRADGEAHLTSGAKKVLFAHPGGHDLDATVVYGVNHQDLQADHRIVSNASCTTNCIIPIIQLLDVAFGIESGTVTTIHSSMNDQPVIDAYHQDLRRTRAASQSIIPVDTKLAAGITRIFPKFCDRFEAISVRVPTINVTAIDLSVSVTSPVDVAEVNQLLQKAARGSFRGIVDYTELPLVSTDFNHDPHSAIVDCTQTRVSGQHLIKTLVWCDNEWGFANRMLDTTLAMARSGF.

12–13 (RI) contributes to the NAD(+) binding site. Residues 154–156 (SCT), arginine 200, 213–214 (TK), and arginine 236 contribute to the substrate site. Cysteine 155 (nucleophile) is an active-site residue. Position 318 (asparagine 318) interacts with NAD(+).

It belongs to the glyceraldehyde-3-phosphate dehydrogenase family. Epd subfamily. As to quaternary structure, homotetramer.

The protein localises to the cytoplasm. The enzyme catalyses D-erythrose 4-phosphate + NAD(+) + H2O = 4-phospho-D-erythronate + NADH + 2 H(+). Its pathway is cofactor biosynthesis; pyridoxine 5'-phosphate biosynthesis; pyridoxine 5'-phosphate from D-erythrose 4-phosphate: step 1/5. In terms of biological role, catalyzes the NAD-dependent conversion of D-erythrose 4-phosphate to 4-phosphoerythronate. The sequence is that of D-erythrose-4-phosphate dehydrogenase from Yersinia enterocolitica serotype O:8 / biotype 1B (strain NCTC 13174 / 8081).